Here is a 445-residue protein sequence, read N- to C-terminus: KICSTOR subunit 2 (445 aa).

This sequence belongs to the KICS2 family. In terms of assembly, part of the KICSTOR complex composed of KPTN, ITFG2, KICS2 and SZT2. SZT2 probably serves as a link between the other three proteins in the KICSTOR complex and may mediate the direct interaction with the GATOR complex via GATOR1. The KICSTOR complex interacts directly with the GATOR1 complex and most probably indirectly with the GATOR2 complex in an amino acid-independent manner.

The protein localises to the lysosome membrane. In terms of biological role, as part of the KICSTOR complex functions in the amino acid-sensing branch of the TORC1 signaling pathway. Recruits, in an amino acid-independent manner, the GATOR1 complex to the lysosomal membranes and allows its interaction with GATOR2 and the RAG GTPases. Functions upstream of the RAG GTPases and is required to negatively regulate mTORC1 signaling in absence of amino acids. In absence of the KICSTOR complex mTORC1 is constitutively localized to the lysosome and activated. The KICSTOR complex is also probably involved in the regulation of mTORC1 by glucose. In Mus musculus (Mouse), this protein is KICSTOR subunit 2.